Here is a 1148-residue protein sequence, read N- to C-terminus: Alpha-mannosidase 2 (1148 aa).

Residues 1–5 (MKLSR) lie on the Cytoplasmic side of the membrane. The chain crosses the membrane as a helical; Signal-anchor for type II membrane protein span at residues 6 to 26 (QFTVFGSAIFCVVIFSLYLML). Residues 27–1148 (DRGHLDYPRG…EISTSRIRLR (1122 aa)) are Lumenal-facing. Serine 80 and serine 82 each carry phosphoserine. The N-linked (GlcNAc...) asparagine glycan is linked to asparagine 93. Zn(2+) contacts are provided by histidine 174, aspartate 176, aspartate 288, and histidine 568. Residue aspartate 288 is the Nucleophile of the active site. The interval 1121–1148 (MHSPPDAQNTSEVSLSPMEISTSRIRLR) is disordered.

Belongs to the glycosyl hydrolase 38 family. In terms of assembly, homodimer; disulfide-linked. Zn(2+) is required as a cofactor. Post-translationally, glycosylated. In terms of tissue distribution, liver.

Its subcellular location is the golgi apparatus membrane. The catalysed reaction is N(4)-{beta-D-GlcNAc-(1-&gt;2)-alpha-D-Man-(1-&gt;3)-[alpha-D-Man-(1-&gt;3)-[alpha-D-Man-(1-&gt;6)]-alpha-D-Man-(1-&gt;6)]-beta-D-Man-(1-&gt;4)-beta-D-GlcNAc-(1-&gt;4)-beta-D-GlcNAc}-L-asparaginyl-[protein] + 2 H2O = 2 alpha-D-mannopyranose + an N(4)-{beta-D-GlcNAc-(1-&gt;2)-alpha-D-Man-(1-&gt;3)-[alpha-D-Man-(1-&gt;6)]-beta-D-Man-(1-&gt;4)-beta-D-GlcNAc-(1-&gt;4)-beta-D-GlcNAc}-L-asparaginyl-[protein]. Its pathway is protein modification; protein glycosylation. With respect to regulation, inhibited by swainsonine. In terms of biological role, catalyzes the first committed step in the biosynthesis of complex N-glycans. It controls conversion of high mannose to complex N-glycans; the final hydrolytic step in the N-glycan maturation pathway. This is Alpha-mannosidase 2 (Man2a1) from Rattus norvegicus (Rat).